A 259-amino-acid polypeptide reads, in one-letter code: GTP cyclohydrolase FolE2 (259 aa).

Belongs to the GTP cyclohydrolase IV family.

The enzyme catalyses GTP + H2O = 7,8-dihydroneopterin 3'-triphosphate + formate + H(+). Its pathway is cofactor biosynthesis; 7,8-dihydroneopterin triphosphate biosynthesis; 7,8-dihydroneopterin triphosphate from GTP: step 1/1. Its function is as follows. Converts GTP to 7,8-dihydroneopterin triphosphate. The polypeptide is GTP cyclohydrolase FolE2 (Thermotoga neapolitana (strain ATCC 49049 / DSM 4359 / NBRC 107923 / NS-E)).